The primary structure comprises 57 residues: Large ribosomal subunit protein bL32 (57 aa).

Basic residues predominate over residues 1 to 19 (MATPKRRMSRANTRSRRSQ). The interval 1–20 (MATPKRRMSRANTRSRRSQW) is disordered.

The protein belongs to the bacterial ribosomal protein bL32 family.

The polypeptide is Large ribosomal subunit protein bL32 (Mycobacterium marinum (strain ATCC BAA-535 / M)).